We begin with the raw amino-acid sequence, 896 residues long: Protein bride of sevenless (896 aa).

Positions 1–31 are cleaved as a signal peptide; the sequence is MKVMDALQSGRRKPLPVALLCILVTVFCVLE. Residues 32 to 530 lie on the Extracellular side of the membrane; that stretch reads CHGADLTSPT…MFWRIKMDTW (499 aa). Residues 38–84 form a disordered region; that stretch reads TSPTKKSAPLRITKPQPTSQQAKPISITTRAPTTVASTTDDEVSSSV. Polar residues predominate over residues 52 to 64; it reads PQPTSQQAKPISI. Residues 65-84 show a composition bias toward low complexity; it reads TTRAPTTVASTTDDEVSSSV. Asn183, Asn307, Asn474, and Asn485 each carry an N-linked (GlcNAc...) asparagine glycan. The next 7 helical transmembrane spans lie at 531 to 554, 570 to 588, 615 to 637, 655 to 676, 693 to 712, 728 to 748, and 759 to 781; these read VATGLTAAILGLIATLAILVFIVV, ILLLLSLILVFCSFVPYSI, VFIMTLVYCFVFSLLLCRAVMLA, AVICAFSVVAQVGMSVQLLVVM, WLWGLLAYDFALLCCVGALI, IVIGSVLIMVIWVAWIALSLF, and LGLQASGWAVLVGILIPRTFLIV. The Cytoplasmic portion of the chain corresponds to 782–896; sequence RGIERSDIAQ…SPDHNKITRF (115 aa). Disordered stretches follow at residues 825–844 and 861–896; these read SQDEVNHQSPSEIPTLPLRG and ANINPQRPPPRPQQSPSRSSVSSLPPSPDHNKITRF. Over residues 874 to 884 the composition is skewed to low complexity; that stretch reads QSPSRSSVSSL.

It belongs to the G-protein coupled receptor 3 family. In terms of tissue distribution, expressed exclusively by R8 photoreceptor cells and is internalized in a sev-dependent manner by R7 cells.

It is found in the cell membrane. Its function is as follows. Acts as a ligand for sevenless tyrosine-kinase receptor during eye development. The polypeptide is Protein bride of sevenless (boss) (Drosophila melanogaster (Fruit fly)).